The primary structure comprises 306 residues: Non-homologous end joining protein Ku 2 (306 aa).

Residues 21–206 form the Ku domain; it reads ISFGLVNIGV…EVSKQEIDMA (186 aa). The disordered stretch occupies residues 233–306; sequence LIDAKTKGTK…GSRDKTRKRA (74 aa). Basic residues predominate over residues 274–290; it reads RTSRRKTTASASRRRSS. Positions 291-300 are enriched in basic and acidic residues; sequence SNREKTGSRD.

Belongs to the prokaryotic Ku family. As to quaternary structure, homodimer. Interacts with LigD.

Its function is as follows. With LigD forms a non-homologous end joining (NHEJ) DNA repair enzyme, which repairs dsDNA breaks with reduced fidelity. Binds linear dsDNA with 5'- and 3'- overhangs but not closed circular dsDNA nor ssDNA. Recruits and stimulates the ligase activity of LigD. The chain is Non-homologous end joining protein Ku 2 from Saccharopolyspora erythraea (strain ATCC 11635 / DSM 40517 / JCM 4748 / NBRC 13426 / NCIMB 8594 / NRRL 2338).